The sequence spans 311 residues: MKKEVIVGSRDSALALWQTNWVVERLSKIHPEINFKIVTMKTKGDKILDVALAKIGDKGLFTKELEHALLNKTIDMAVHSMKDLPTVLPEGLKIGAFCEREYPGDVFISPKGFKFLELPQGARIGTSSLRRIAQILAVRPDLQAIPLRGNLPTRFRKMEEMDLDGIILAYAGVKRLGYEDKITEMLSFDLCLPAVGQGSIGVEIRADDTFIEELLKPIDHFATNRAIRAERAFLKRLEGGCQIPIGAYSEVKENRLHLKGVVASLDGKLVIKGEKEGSIEEPEKVGISLAEELLTKGAQKILEEIRRDANE.

Cys241 bears the S-(dipyrrolylmethanemethyl)cysteine mark.

Belongs to the HMBS family. As to quaternary structure, monomer. Requires dipyrromethane as cofactor.

The catalysed reaction is 4 porphobilinogen + H2O = hydroxymethylbilane + 4 NH4(+). It participates in porphyrin-containing compound metabolism; protoporphyrin-IX biosynthesis; coproporphyrinogen-III from 5-aminolevulinate: step 2/4. In terms of biological role, tetrapolymerization of the monopyrrole PBG into the hydroxymethylbilane pre-uroporphyrinogen in several discrete steps. This Carboxydothermus hydrogenoformans (strain ATCC BAA-161 / DSM 6008 / Z-2901) protein is Porphobilinogen deaminase.